We begin with the raw amino-acid sequence, 254 residues long: Alcohol dehydrogenase (254 aa).

10-33 (FVAGLGGIGLDTSREIVKSGPKNL) is a binding site for NAD(+). A substrate-binding site is contributed by serine 138. Catalysis depends on tyrosine 151, which acts as the Proton acceptor.

This sequence belongs to the short-chain dehydrogenases/reductases (SDR) family. In terms of assembly, homodimer.

It catalyses the reaction a primary alcohol + NAD(+) = an aldehyde + NADH + H(+). The catalysed reaction is a secondary alcohol + NAD(+) = a ketone + NADH + H(+). The polypeptide is Alcohol dehydrogenase (Adh) (Drosophila picticornis (Fruit fly)).